Reading from the N-terminus, the 361-residue chain is tRNA N6-adenosine threonylcarbamoyltransferase (361 aa).

Fe cation contacts are provided by His-110 and His-114. Substrate is bound by residues 132–136 (LVSGG), Asp-165, Gly-178, Asp-182, and Asn-284. A Fe cation-binding site is contributed by Asp-312.

This sequence belongs to the KAE1 / TsaD family. It depends on Fe(2+) as a cofactor.

Its subcellular location is the cytoplasm. It catalyses the reaction L-threonylcarbamoyladenylate + adenosine(37) in tRNA = N(6)-L-threonylcarbamoyladenosine(37) in tRNA + AMP + H(+). Required for the formation of a threonylcarbamoyl group on adenosine at position 37 (t(6)A37) in tRNAs that read codons beginning with adenine. Is involved in the transfer of the threonylcarbamoyl moiety of threonylcarbamoyl-AMP (TC-AMP) to the N6 group of A37, together with TsaE and TsaB. TsaD likely plays a direct catalytic role in this reaction. The protein is tRNA N6-adenosine threonylcarbamoyltransferase of Desulfovibrio desulfuricans (strain ATCC 27774 / DSM 6949 / MB).